Here is a 204-residue protein sequence, read N- to C-terminus: Leucyl/phenylalanyl-tRNA--protein transferase (204 aa).

This sequence belongs to the L/F-transferase family.

It localises to the cytoplasm. It catalyses the reaction N-terminal L-lysyl-[protein] + L-leucyl-tRNA(Leu) = N-terminal L-leucyl-L-lysyl-[protein] + tRNA(Leu) + H(+). It carries out the reaction N-terminal L-arginyl-[protein] + L-leucyl-tRNA(Leu) = N-terminal L-leucyl-L-arginyl-[protein] + tRNA(Leu) + H(+). The enzyme catalyses L-phenylalanyl-tRNA(Phe) + an N-terminal L-alpha-aminoacyl-[protein] = an N-terminal L-phenylalanyl-L-alpha-aminoacyl-[protein] + tRNA(Phe). Functionally, functions in the N-end rule pathway of protein degradation where it conjugates Leu, Phe and, less efficiently, Met from aminoacyl-tRNAs to the N-termini of proteins containing an N-terminal arginine or lysine. In Rhizobium etli (strain CIAT 652), this protein is Leucyl/phenylalanyl-tRNA--protein transferase.